Here is a 92-residue protein sequence, read N- to C-terminus: Small ribosomal subunit protein uS17 (92 aa).

The protein belongs to the universal ribosomal protein uS17 family. As to quaternary structure, part of the 30S ribosomal subunit.

Its function is as follows. One of the primary rRNA binding proteins, it binds specifically to the 5'-end of 16S ribosomal RNA. The sequence is that of Small ribosomal subunit protein uS17 from Cupriavidus pinatubonensis (strain JMP 134 / LMG 1197) (Cupriavidus necator (strain JMP 134)).